The following is a 448-amino-acid chain: Phosphoglucosamine mutase (448 aa).

The active-site Phosphoserine intermediate is S100. Residues S100, D240, D242, and D244 each contribute to the Mg(2+) site. S100 carries the post-translational modification Phosphoserine.

This sequence belongs to the phosphohexose mutase family. It depends on Mg(2+) as a cofactor. Activated by phosphorylation.

It carries out the reaction alpha-D-glucosamine 1-phosphate = D-glucosamine 6-phosphate. Catalyzes the conversion of glucosamine-6-phosphate to glucosamine-1-phosphate. The polypeptide is Phosphoglucosamine mutase (Bacillus cereus (strain B4264)).